Here is a 147-residue protein sequence, read N- to C-terminus: Deoxyuridine 5'-triphosphate nucleotidohydrolase (147 aa).

Arg-24 serves as a coordination point for Mg(2+). DUTP contacts are provided by residues 68-70 (PRS), 82-85 (GVID), Tyr-88, Gly-93, Ile-95, and Arg-111.

This sequence belongs to the dUTPase family. It depends on Mg(2+) as a cofactor.

The enzyme catalyses dUTP + H2O = dUMP + diphosphate + H(+). In terms of biological role, this enzyme is involved in nucleotide metabolism: it produces dUMP, the immediate precursor of thymidine nucleotides and it decreases the intracellular concentration of dUTP so that uracil cannot be incorporated into DNA. This chain is Deoxyuridine 5'-triphosphate nucleotidohydrolase (OPG046), found in Bos taurus (Bovine).